The sequence spans 470 residues: Uronate isomerase (470 aa).

The protein belongs to the metallo-dependent hydrolases superfamily. Uronate isomerase family.

It catalyses the reaction D-glucuronate = D-fructuronate. The enzyme catalyses aldehydo-D-galacturonate = keto-D-tagaturonate. Its pathway is carbohydrate metabolism; pentose and glucuronate interconversion. In Klebsiella pneumoniae (strain 342), this protein is Uronate isomerase.